A 208-amino-acid chain; its full sequence is Large ribosomal subunit protein uL3 (208 aa).

The interval 116–148 (GFQGVIKRHGQSRGPMAHGSRYHRRPGSMGPVA) is disordered.

The protein belongs to the universal ribosomal protein uL3 family. In terms of assembly, part of the 50S ribosomal subunit. Forms a cluster with proteins L14 and L19.

One of the primary rRNA binding proteins, it binds directly near the 3'-end of the 23S rRNA, where it nucleates assembly of the 50S subunit. In Streptococcus pyogenes serotype M6 (strain ATCC BAA-946 / MGAS10394), this protein is Large ribosomal subunit protein uL3.